The following is a 461-amino-acid chain: tRNA modification GTPase MnmE (461 aa).

(6S)-5-formyl-5,6,7,8-tetrahydrofolate is bound by residues Arg23, Glu88, and Arg127. A TrmE-type G domain is found at Gly223–Tyr382. Asn233 contacts K(+). Residues Asn233 to Ser238, Thr252 to Thr258, and Asp277 to Gly280 contribute to the GTP site. A Mg(2+)-binding site is contributed by Ser237. K(+) is bound by residues Thr252, Val254, and Thr257. Thr258 is a Mg(2+) binding site. Lys461 contacts (6S)-5-formyl-5,6,7,8-tetrahydrofolate.

The protein belongs to the TRAFAC class TrmE-Era-EngA-EngB-Septin-like GTPase superfamily. TrmE GTPase family. Homodimer. Heterotetramer of two MnmE and two MnmG subunits. The cofactor is K(+).

It is found in the cytoplasm. In terms of biological role, exhibits a very high intrinsic GTPase hydrolysis rate. Involved in the addition of a carboxymethylaminomethyl (cmnm) group at the wobble position (U34) of certain tRNAs, forming tRNA-cmnm(5)s(2)U34. The sequence is that of tRNA modification GTPase MnmE from Alkaliphilus oremlandii (strain OhILAs) (Clostridium oremlandii (strain OhILAs)).